Here is a 59-residue protein sequence, read N- to C-terminus: Large ribosomal subunit protein bL32 (59 aa).

It belongs to the bacterial ribosomal protein bL32 family.

The chain is Large ribosomal subunit protein bL32 from Polynucleobacter necessarius subsp. necessarius (strain STIR1).